Consider the following 92-residue polypeptide: Small ribosomal subunit protein uS15c (92 aa).

Belongs to the universal ribosomal protein uS15 family. As to quaternary structure, part of the 30S ribosomal subunit.

Its subcellular location is the plastid. It is found in the chloroplast. The polypeptide is Small ribosomal subunit protein uS15c (rps15) (Carica papaya (Papaya)).